The following is a 415-amino-acid chain: DNA polymerase IV (415 aa).

Residues 15 to 196 form the UmuC domain; it reads ILHVDMNCFF…LSVEAMHGIG (182 aa). Mg(2+) contacts are provided by D19 and D115. Residue E116 is part of the active site. Basic and acidic residues predominate over residues 235 to 246; it reads KRAKGTDDREVD. Residues 235–260 are disordered; it reads KRAKGTDDREVDPSQMGQHKSVGNSM. The span at 249-260 shows a compositional bias: polar residues; that stretch reads QMGQHKSVGNSM.

It belongs to the DNA polymerase type-Y family. As to quaternary structure, monomer. Mg(2+) serves as cofactor.

It localises to the cytoplasm. The catalysed reaction is DNA(n) + a 2'-deoxyribonucleoside 5'-triphosphate = DNA(n+1) + diphosphate. Functionally, poorly processive, error-prone DNA polymerase involved in untargeted mutagenesis. Copies undamaged DNA at stalled replication forks, which arise in vivo from mismatched or misaligned primer ends. These misaligned primers can be extended by PolIV. Exhibits no 3'-5' exonuclease (proofreading) activity. May be involved in translesional synthesis, in conjunction with the beta clamp from PolIII. This chain is DNA polymerase IV, found in Bacillus cereus (strain ATCC 14579 / DSM 31 / CCUG 7414 / JCM 2152 / NBRC 15305 / NCIMB 9373 / NCTC 2599 / NRRL B-3711).